Here is a 91-residue protein sequence, read N- to C-terminus: UPF0250 protein NGO_0791 (91 aa).

This sequence belongs to the UPF0250 family.

In Neisseria gonorrhoeae (strain ATCC 700825 / FA 1090), this protein is UPF0250 protein NGO_0791.